A 571-amino-acid chain; its full sequence is GABA-specific permease (571 aa).

The Cytoplasmic segment spans residues 1 to 73; the sequence is MSMSSKNENK…IGYKQELKRQ (73 aa). A helical membrane pass occupies residues 74–94; sequence FSTLQVFGIAFSIMGLLPSIA. At 95-105 the chain is on the vacuolar side; sequence SVMGGGLGGGP. Residues 106–126 form a helical membrane-spanning segment; it reads ATLVWGWFVAAFFILLVGITM. Residues 127-153 lie on the Cytoplasmic side of the membrane; that stretch reads AEHASSIPTAGGLYYWTYYYAPEGYKE. A helical transmembrane segment spans residues 154 to 174; sequence IISFIIGCSNSLALAAGVCSI. Over 175–198 the chain is Vacuolar; it reads DYGLAEEIAAAVTLTKDGNFEVTS. A helical membrane pass occupies residues 199–219; that stretch reads GKLYGIFAGAVVVMCICTCVA. The Cytoplasmic segment spans residues 220 to 228; that stretch reads SGAIARLQT. The chain crosses the membrane as a helical span at residues 229 to 249; it reads LSIFANLFIIVLLFIALPIGT. The Vacuolar segment spans residues 250–271; sequence KHRMGGFNDGDFIFGKYENLSD. Residues 272-292 form a helical membrane-spanning segment; it reads WNNGWQFCLAGFMPAVWTIGS. Residues 293–312 are Cytoplasmic-facing; that stretch reads FDSCVHQSEEAKDAKKSVPI. Residues 313–333 traverse the membrane as a helical segment; it reads GIISSIAVCWILGWLIIICLM. The Vacuolar portion of the chain corresponds to 334–364; the sequence is ACINPDIDSVLDSKYGFALAQIIYDSLGKKW. A helical membrane pass occupies residues 365–385; it reads AIAFMSLIAFCQFLMGASITT. Over 386–416 the chain is Cytoplasmic; sequence AVSRQVWAFSRDNGLPLSKYIKRVDSKYSVP. A helical membrane pass occupies residues 417 to 437; it reads FFAILAACVGSLILGLLCLID. At 438–441 the chain is on the vacuolar side; that stretch reads DAAT. A helical transmembrane segment spans residues 442–462; sequence DALFSLAVAGNNLAWSTPTVF. The Cytoplasmic portion of the chain corresponds to 463 to 482; the sequence is RLTSGRDLFRPGPFYLGKIW. A helical membrane pass occupies residues 483–503; the sequence is SPIVAWTGVAFQLFIIILVMF. Over 504 to 514 the chain is Vacuolar; that stretch reads PSQQHGITKST. A helical membrane pass occupies residues 515-535; it reads MNYACVIGPGIWILAGIYYKV. Residues 536 to 571 are Cytoplasmic-facing; sequence YKKKYYHGPATNLSDDDYTEAVGADVIDTIMSKQEP.

The protein belongs to the amino acid-polyamine-organocation (APC) superfamily. Amino acid/choline transporter (ACT) (TC 2.A.3.4) family.

It localises to the vacuole membrane. In terms of biological role, required for high-affinity, high-specificity GABA transport. Also transports putrescine. The polypeptide is GABA-specific permease (UGA4) (Saccharomyces cerevisiae (strain ATCC 204508 / S288c) (Baker's yeast)).